A 229-amino-acid polypeptide reads, in one-letter code: MAKKKAFIPFLYFISIVFFPWWISLCCNKSLKTWITNWWNTRQCETFLNEIQEKSLLEKFIQLEELFQLDEMLKEYPETDLQKFRLEIHKETIQFIKIHNEYRIHTIFHFSTNLISFVILSSYSFWGKEKLFILNSWVQEFLYNLSDTIKAFLILLLTDLCIGFHSPHGWELMIGYIYKDFGFAHYEQILSGLVSTFPVILDTIFKYWIFRYLNRVSPSLVVIYHAIND.

4 consecutive transmembrane segments (helical) span residues 6–26 (AFIP…ISLC), 107–127 (IFHF…SFWG), 152–172 (FLIL…GWEL), and 189–209 (ILSG…KYWI).

Belongs to the CemA family.

It is found in the plastid. Its subcellular location is the chloroplast inner membrane. It catalyses the reaction K(+)(in) + H(+)(out) = K(+)(out) + H(+)(in). In terms of biological role, contributes to K(+)/H(+) antiport activity by supporting proton efflux to control proton extrusion and homeostasis in chloroplasts in a light-dependent manner to modulate photosynthesis. Prevents excessive induction of non-photochemical quenching (NPQ) under continuous-light conditions. Indirectly promotes efficient inorganic carbon uptake into chloroplasts. This is Potassium/proton antiporter CemA from Aethionema grandiflorum (Persian stone-cress).